Consider the following 71-residue polypeptide: Ranatuerin-2Va (71 aa).

The N-terminal stretch at 1 to 22 (MFTLKKSFLLLFFLGTITLSLC) is a signal peptide. The propeptide occupies 23–43 (EQERGADEDDGVEMTEEEVKR). A disulfide bridge connects residues cysteine 66 and cysteine 71.

Expressed by the skin glands.

The protein localises to the secreted. Antimicrobial peptide. This Odorrana versabilis (Chinese bamboo leaf odorous frog) protein is Ranatuerin-2Va.